A 169-amino-acid polypeptide reads, in one-letter code: Lipoprotein signal peptidase (169 aa).

A run of 3 helical transmembrane segments spans residues 1–21, 68–88, and 94–114; these read MPES…LILV, WQRW…VVWL, and HETL…GNLY. Residues Asp-124 and Asp-143 contribute to the active site. A helical membrane pass occupies residues 135-155; sequence FFPAFNLADTFITIGAILLAL.

The protein belongs to the peptidase A8 family.

Its subcellular location is the cell inner membrane. It catalyses the reaction Release of signal peptides from bacterial membrane prolipoproteins. Hydrolyzes -Xaa-Yaa-Zaa-|-(S,diacylglyceryl)Cys-, in which Xaa is hydrophobic (preferably Leu), and Yaa (Ala or Ser) and Zaa (Gly or Ala) have small, neutral side chains.. The protein operates within protein modification; lipoprotein biosynthesis (signal peptide cleavage). This protein specifically catalyzes the removal of signal peptides from prolipoproteins. This is Lipoprotein signal peptidase from Ectopseudomonas mendocina (strain ymp) (Pseudomonas mendocina).